The following is a 151-amino-acid chain: Nucleoside diphosphate kinase (151 aa).

Residues lysine 11, phenylalanine 59, arginine 87, threonine 93, arginine 104, and asparagine 114 each coordinate ATP. Histidine 117 acts as the Pros-phosphohistidine intermediate in catalysis.

It belongs to the NDK family. Homotetramer. It depends on Mg(2+) as a cofactor.

The protein resides in the cytoplasm. It carries out the reaction a 2'-deoxyribonucleoside 5'-diphosphate + ATP = a 2'-deoxyribonucleoside 5'-triphosphate + ADP. The enzyme catalyses a ribonucleoside 5'-diphosphate + ATP = a ribonucleoside 5'-triphosphate + ADP. Major role in the synthesis of nucleoside triphosphates other than ATP. The ATP gamma phosphate is transferred to the NDP beta phosphate via a ping-pong mechanism, using a phosphorylated active-site intermediate. The polypeptide is Nucleoside diphosphate kinase (Prochlorococcus marinus (strain SARG / CCMP1375 / SS120)).